Consider the following 380-residue polypeptide: DNA replication and repair protein RecF (380 aa).

30-37 contacts ATP; it reads GQNGQGKT.

Belongs to the RecF family.

It is found in the cytoplasm. In terms of biological role, the RecF protein is involved in DNA metabolism; it is required for DNA replication and normal SOS inducibility. RecF binds preferentially to single-stranded, linear DNA. It also seems to bind ATP. The polypeptide is DNA replication and repair protein RecF (Myxococcus xanthus (strain DK1622)).